The chain runs to 179 residues: uncharacterized protein (179 aa).

The tract at residues S53–E82 is disordered. The span at P54–D67 shows a compositional bias: basic and acidic residues.

This is an uncharacterized protein from Ictaluridae (bullhead catfishes).